Here is a 439-residue protein sequence, read N- to C-terminus: Putative porin QuiX (439 aa).

A signal peptide spans 1-22 (MRHFFKLGLVSAAVLGSQMTLA).

It belongs to the OprB family.

The protein localises to the cell outer membrane. Could be involved in the transport of quinate or shikimate. The polypeptide is Putative porin QuiX (quiX) (Acinetobacter baylyi (strain ATCC 33305 / BD413 / ADP1)).